The following is a 755-amino-acid chain: Cartilage oligomeric matrix protein (755 aa).

The N-terminal stretch at 1-19 is a signal peptide; the sequence is MGPTACVLVLALAILRATG. The tract at residues 21-84 is COMP N-terminal; it reads GQIPLGGDLA…PARTPGLSVR (64 aa). Positions 85–124 constitute an EGF-like 1 domain; that stretch reads PVPLCAPGSCFPGVVCSETATGARCGPCPPGYTGNGSHCT. Disulfide bonds link Cys-89–Cys-100, Cys-94–Cys-109, Cys-112–Cys-123, Cys-129–Cys-140, Cys-134–Cys-149, Cys-152–Cys-176, Cys-182–Cys-195, Cys-189–Cys-204, Cys-207–Cys-219, Cys-227–Cys-241, Cys-235–Cys-251, Cys-253–Cys-264, Cys-280–Cys-285, Cys-290–Cys-310, Cys-326–Cys-346, Cys-349–Cys-369, Cys-385–Cys-405, Cys-408–Cys-428, Cys-446–Cys-466, Cys-482–Cys-502, and Cys-518–Cys-739. N-linked (GlcNAc...) asparagine glycosylation is present at Asn-119. Residues 125 to 177 form the EGF-like 2; calcium-binding domain; the sequence is DVNECNAHPCFPRVRCINTSPGFHCEACPPGFSGPTHEGVGLTFAKSNKQVCT. Residues 178 to 220 form the EGF-like 3; calcium-binding domain; the sequence is DINECETGQHNCVPNSVCVNTRGSFQCGPCQPGFVGDQTSGCQ. Residues 223–265 form the EGF-like 4 domain; that stretch reads GQHFCPDGSPSPCHEKANCVLERDGSRSCVCAVGWAGNGLLCG. TSP type-3 repeat units follow at residues 266-298, 299-334, 335-357, 358-393, 394-416, 417-454, 455-490, and 491-526; these read RDTDLDGFPDEKLRCSERQCRKDNCVTVPNSGQ, EDVDRDGIGDACDPDADGDGVPNEQDNCPLVRNPDQ, RNSDSDKWGDACDNCRSKKNDDQ, KDTDLDGRGDACDDDIDGDRIRNVADNCPRVPNFDQ, SDSDGDGVGDACDNCPQKDNPDQ, RDVDHDFVGDACDSDQDQDGDGHQDSRDNCPTVPNSAQ, QDSDHDGKGDACDDDDDNDGVPDSRDNCRLVPNPGQ, and EDNDRDGVGDACQGDFDADKVIDKIDVCPENAEVTL. Disordered stretches follow at residues 296–341 and 353–501; these read SGQE…DSDK and KNDD…VGDA. Composition is skewed to basic and acidic residues over residues 332–341 and 353–368; these read PDQRNSDSDK and KNDDQKDTDLDGRGDA. Ser-394 carries the phosphoserine modification. 2 stretches are compositionally biased toward basic and acidic residues: residues 412–424 and 456–465; these read DNPDQRDVDHDFV and DSDHDGKGDA. Residues 525-755 are mediates cell survival and induction of the IAP family of survival proteins; sequence TLTDFRAFQT…DYESHRLQRV (231 aa). In terms of domain architecture, TSP C-terminal spans 530–744; it reads RAFQTVVLDP…LRYRCNDTIP (215 aa). Residue Asn-740 is glycosylated (N-linked (GlcNAc...) asparagine).

It belongs to the thrombospondin family. As to quaternary structure, pentamer; disulfide-linked. Exists in a more compact conformation in the presence of calcium and shows a more extended conformation in the absence of calcium. Interacts with ITGB3, ITGA5 and FN1. Binding to FN1 requires the presence of divalent cations (Ca(2+), Mg(2+) or Mn(2+)). The greatest amount of binding is seen in the presence of Mn(2+). Interacts with MATN1, MATN3, MATN4 and ACAN. Binds heparin, heparan sulfate and chondroitin sulfate. EDTA dimishes significantly its binding to ACAN and abolishes its binding to MATN3, MATN4 and chondroitin sulfate. Interacts with collagen I, II and IX, and interaction with these collagens is dependent on the presence of zinc ions. Interacts with ADAMTS12. Interacts with ITGA7. Ca(2+) is required as a cofactor. Post-translationally, proteolytically cleaved by metalloproteases ADAMTS4 and ADAMTS1 with ADAMTS4 showing more potent activity. In terms of tissue distribution, expressed in cartilage, including nasal, knee epiphyseal and rib tissues. Abundantly expressed in chondrocyte and tendon extracellular matrix (at protein level).

The protein localises to the secreted. It is found in the extracellular space. The protein resides in the extracellular matrix. Plays a role in the structural integrity of cartilage via its interaction with other extracellular matrix proteins such as the collagens and fibronectin. Can mediate the interaction of chondrocytes with the cartilage extracellular matrix through interaction with cell surface integrin receptors. Could play a role in the pathogenesis of osteoarthritis. Potent suppressor of apoptosis in both primary chondrocytes and transformed cells. Suppresses apoptosis by blocking the activation of caspase-3 and by inducing the IAP family of survival proteins (BIRC3, BIRC2, BIRC5 and XIAP). Essential for maintaining a vascular smooth muscle cells (VSMCs) contractile/differentiated phenotype under physiological and pathological stimuli. Maintains this phenotype of VSMCs by interacting with ITGA7. In Mus musculus (Mouse), this protein is Cartilage oligomeric matrix protein.